The following is a 230-amino-acid chain: RNA chaperone ProQ (230 aa).

Residues 106-181 (AKARVQAQRA…EERHTPVSDI (76 aa)) are disordered. A compositionally biased stretch (basic and acidic residues) spans 146–155 (RRKDNAERKP). Residues 158 to 167 (AKPAAAAKPS) show a composition bias toward low complexity.

This sequence belongs to the ProQ family.

Its subcellular location is the cytoplasm. Its function is as follows. RNA chaperone with significant RNA binding, RNA strand exchange and RNA duplexing activities. May regulate ProP activity through an RNA-based, post-transcriptional mechanism. In Cronobacter sakazakii (strain ATCC BAA-894) (Enterobacter sakazakii), this protein is RNA chaperone ProQ.